The following is a 182-amino-acid chain: Ribosome hibernation promotion factor (182 aa).

It belongs to the HPF/YfiA ribosome-associated protein family. Long HPF subfamily. As to quaternary structure, interacts with 100S ribosomes.

Its subcellular location is the cytoplasm. Required for dimerization of active 70S ribosomes into 100S ribosomes in stationary phase; 100S ribosomes are translationally inactive and sometimes present during exponential growth. The chain is Ribosome hibernation promotion factor from Streptococcus pyogenes serotype M6 (strain ATCC BAA-946 / MGAS10394).